The sequence spans 345 residues: Peptidoglycan-recognition protein LE (345 aa).

The span at 1-16 (MSESGIKKLSQERTRE) shows a compositional bias: basic and acidic residues. Positions 1–38 (MSESGIKKLSQERTREWLASQEDEELESIAESSVVDSL) are disordered. Residues Asn52, Asn95, Asn98, and Asn106 are each glycosylated (N-linked (GlcNAc...) asparagine). The disordered stretch occupies residues 124 to 152 (NRRDRRHVSPPRDNAPKTPTHFEDDYQDE). The 127-residue stretch at 198-324 (PVKYVVILHT…CQCNSTESPG (127 aa)) folds into the N-acetylmuramoyl-L-alanine amidase domain. Residues His206, 229 to 240 (HIESRGWNDIAY), Arg254, 261 to 267 (AHTLGYN), and 314 to 322 (HCQCNSTES) contribute to the peptidoglycan site. An N-linked (GlcNAc...) asparagine glycan is attached at Asn318.

Belongs to the N-acetylmuramoyl-L-alanine amidase 2 family. Monomer. Peptidoglycan binding induces oligomerization. In terms of tissue distribution, expressed in hemolymph. Localizes at the lumenal surface of the trachea (at protein level).

The protein resides in the secreted. Peptidoglycan-recognition protein that plays a key role in innate immunity by binding to murein peptidoglycans (PGN) of Gram-negative bacteria and activating the imd/Relish pathway. Has no activity against on Gram-positive bacteria. Binds to diaminopimelic acid-type PGN (DAP-type PGN), an activator of the imd/Relish pathway. Functions synergistically with PGRP-LC in producing resistance to E.coli and B.megaterium infections, which have the DAP-type peptidoglycan. Acts both upstream and in parallel with PGRP-LC in the imd/Relish pathway, and is required for infection-dependent activation of melanization. Required for Relish processing and nuclear translocation following proteolytic cleavage. Its localization suggests a role in the recognition and subsequent activation of the signaling at the first point of contact with invading bacteria. This Drosophila melanogaster (Fruit fly) protein is Peptidoglycan-recognition protein LE (PGRP-LE).